We begin with the raw amino-acid sequence, 275 residues long: Spermidine/putrescine transport system permease protein PotB (275 aa).

A helical membrane pass occupies residues 1–21 (MIVTIVGWLVLFVFLPNLMII). Residues 22 to 60 (GTSFLTRDDASFVKMVFTLDNYTRLLDPLYFEVLLHSLN) are Periplasmic-facing. The ABC transmembrane type-1 domain maps to 55–261 (LLHSLNMALI…IVMGLMLLVY (207 aa)). Residues 61-81 (MALIATLACLVLGYPFAWFLA) form a helical membrane-spanning segment. Over 82–89 (KLPHKVRP) the chain is Cytoplasmic. A helical transmembrane segment spans residues 90–110 (LLLFLLIVPFWTNSLIRIYGL). The Periplasmic segment spans residues 111–135 (KIFLSTKGYLNEFLLWLGVIDTPIR). A helical membrane pass occupies residues 136–156 (IMFTPSAVIIGLVYILLPFMV). The Cytoplasmic segment spans residues 157-187 (MPLYSSIEKLDKPLLEAARDLGASKLQTFIR). A helical membrane pass occupies residues 188-208 (IIIPLTMPGIIAGCLLVMLPA). The Periplasmic segment spans residues 209–241 (MGLFYVSDLMGGAKNLLIGNVIKVQFLNIRDWP). A helical transmembrane segment spans residues 242 to 262 (FGAATSITLTIVMGLMLLVYW). Topologically, residues 263–275 (RASRLLNKKVELE) are cytoplasmic.

The protein belongs to the binding-protein-dependent transport system permease family. CysTW subfamily.

Its subcellular location is the cell inner membrane. In terms of biological role, required for the activity of the bacterial periplasmic transport system of putrescine and spermidine. The chain is Spermidine/putrescine transport system permease protein PotB (potB) from Escherichia coli (strain K12).